The sequence spans 250 residues: uncharacterized protein (250 aa).

This is an uncharacterized protein from Mycobacterium tuberculosis (strain CDC 1551 / Oshkosh).